Consider the following 635-residue polypeptide: Chaperone protein DnaK (635 aa).

T198 is subject to Phosphothreonine; by autocatalysis. Positions 598–635 (YAKAQPGEEQAGGAPHEGEAKDEKVVDADFEEVKEDKK) are disordered. Positions 613-624 (HEGEAKDEKVVD) are enriched in basic and acidic residues. Acidic residues predominate over residues 625–635 (ADFEEVKEDKK).

This sequence belongs to the heat shock protein 70 family.

In terms of biological role, acts as a chaperone. This Geotalea uraniireducens (strain Rf4) (Geobacter uraniireducens) protein is Chaperone protein DnaK.